Consider the following 246-residue polypeptide: 2',3'-cyclic-nucleotide 3'-phosphodiesterase (246 aa).

The Proton donor/acceptor role is filled by histidine 40. Residue threonine 42 coordinates substrate. Residues 133–146 are compositionally biased toward polar residues; it reads QNPQLYTKDNNGNT. The interval 133 to 159 is disordered; sequence QNPQLYTKDNNGNTIRRKPSKKKSKTT. Residues 147–156 show a composition bias toward basic residues; that stretch reads IRRKPSKKKS. The Proton donor/acceptor role is filled by histidine 188. Substrate contacts are provided by serine 190 and tyrosine 193.

It belongs to the 2H phosphoesterase superfamily. CPD1 family.

It localises to the golgi apparatus. The enzyme catalyses a nucleoside 2',3'-cyclic phosphate + H2O = a nucleoside 2'-phosphate + H(+). Involved in the metabolism of ADP-ribose 1',2'-cyclic phosphate which is produced as a consequence of tRNA splicing. In Candida albicans (strain SC5314 / ATCC MYA-2876) (Yeast), this protein is 2',3'-cyclic-nucleotide 3'-phosphodiesterase (CPD1).